The chain runs to 407 residues: Probable peptidoglycan glycosyltransferase FtsW (407 aa).

The Cytoplasmic portion of the chain corresponds to methionine 1–aspartate 25. The chain crosses the membrane as a helical span at residues phenylalanine 26–alanine 46. At serine 47–histidine 65 the chain is on the periplasmic side. The chain crosses the membrane as a helical span at residues leucine 66–threonine 86. Over tryptophan 87–arginine 89 the chain is Cytoplasmic. The helical transmembrane segment at leucine 90–isoleucine 110 threads the bilayer. The Periplasmic segment spans residues glycine 111–arginine 119. The helical transmembrane segment at tryptophan 120–isoleucine 140 threads the bilayer. At tyrosine 141–glutamate 155 the chain is on the cytoplasmic side. The helical transmembrane segment at serine 156–methionine 176 threads the bilayer. The Periplasmic segment spans residues glutamate 177 to glycine 181. Residues alanine 182 to phenylalanine 202 form a helical membrane-spanning segment. Arginine 203 is a topological domain (cytoplasmic). Residues phenylalanine 204–tyrosine 224 traverse the membrane as a helical segment. Over arginine 225–serine 283 the chain is Periplasmic. Residues valine 284–valine 304 traverse the membrane as a helical segment. Residues cysteine 305–tyrosine 321 are Cytoplasmic-facing. Residues phenylalanine 322 to isoleucine 342 form a helical membrane-spanning segment. Topologically, residues glycine 343–threonine 355 are periplasmic. The helical transmembrane segment at leucine 356–leucine 376 threads the bilayer. Topologically, residues leucine 377–arginine 407 are cytoplasmic.

The protein belongs to the SEDS family. FtsW subfamily.

It localises to the cell inner membrane. It carries out the reaction [GlcNAc-(1-&gt;4)-Mur2Ac(oyl-L-Ala-gamma-D-Glu-L-Lys-D-Ala-D-Ala)](n)-di-trans,octa-cis-undecaprenyl diphosphate + beta-D-GlcNAc-(1-&gt;4)-Mur2Ac(oyl-L-Ala-gamma-D-Glu-L-Lys-D-Ala-D-Ala)-di-trans,octa-cis-undecaprenyl diphosphate = [GlcNAc-(1-&gt;4)-Mur2Ac(oyl-L-Ala-gamma-D-Glu-L-Lys-D-Ala-D-Ala)](n+1)-di-trans,octa-cis-undecaprenyl diphosphate + di-trans,octa-cis-undecaprenyl diphosphate + H(+). It functions in the pathway cell wall biogenesis; peptidoglycan biosynthesis. In terms of biological role, peptidoglycan polymerase that is essential for cell division. This is Probable peptidoglycan glycosyltransferase FtsW from Pseudomonas fluorescens (strain SBW25).